The following is a 793-amino-acid chain: E3 UFM1-protein ligase 1 (793 aa).

Ala2 is modified (N-acetylalanine). The mediates interaction with DDRGK1 stretch occupies residues 2 to 200 (ADAWEEIRRL…RGLFSAITRP (199 aa)). A required for E3 UFM1-protein ligase activity region spans residues 2–212 (ADAWEEIRRL…VNSLISKYGF (211 aa)). The segment at 121–250 (DRLAEEVNDK…KAVFVPDIYS (130 aa)) is involved in CDK5RAP3-binding. The segment at 200–400 (PTAVNSLISK…NPVHLITEED (201 aa)) is mediates interaction with TRIP4. The interval 407–473 (LESVSTSKKD…SSHTGKKKPE (67 aa)) is disordered. Residue Arg433 is modified to Omega-N-methylarginine. Phosphoserine is present on Ser458. The segment at 490 to 684 (IQDAPEEFIS…QLKVTEDPAL (195 aa)) is mediates interaction with CDK5RAP3. Phosphothreonine is present on Thr536.

This sequence belongs to the UFL1 family. Catalytic component of the UFM1 ribosome E3 ligase (UREL) complex, composed of UFL1, DDRGK1 and CDK5RAP3. Interacts with E2-like enzyme UFC1. Interacts with RELA. Interacts with NBN; promoting recruitment to double-strand breaks following DNA damage. Interacts (when phosphorylated) with YWHAG/14-3-3-gamma; sequestering UFL1 and preventing its association with PDCD1/PD-1 substrate. Ubiquitinated, leading to its degradation by the proteasome. Interaction with CDK5RAP3 protects both proteins against ubiquitination and degradation via the proteasome. Post-translationally, phosphorylation at Thr-536 by AMPK promotes its interaction with YWHAG/14-3-3-gamma, thereby preventing UFL1 association with PDCD1/PD-1 substrate.

The protein resides in the endoplasmic reticulum membrane. It is found in the cytoplasm. Its subcellular location is the cytosol. It localises to the nucleus. The protein localises to the chromosome. In terms of biological role, E3 protein ligase that mediates ufmylation, the covalent attachment of the ubiquitin-like modifier UFM1 to lysine residues on target proteins, and which plays a key role in various processes, such as ribosome recycling, response to DNA damage, interferon response or reticulophagy (also called ER-phagy). Catalyzes ufmylation of many protein, such as CD274/PD-L1, CDK5RAP3, CYB5R3, DDRGK1, EIF6, histone H4, MRE11, P4HB, PDCD1/PD-1, TRIP4, RPN1, RPS20/uS10, RPL10/uL16, RPL26/uL24, SYVN1/HRD1 and TP53/p53. As part of the UREL complex, plays a key role in ribosome recycling by catalyzing mono-ufmylation of RPL26/uL24 subunit of the 60S ribosome. Ufmylation of RPL26/uL24 occurs on free 60S ribosomes following ribosome dissociation: it weakens the junction between post-termination 60S subunits and SEC61 translocons, promoting release and recycling of the large ribosomal subunit from the endoplasmic reticulum membrane. Ufmylation of RPL26/uL24 and subsequent 60S ribosome recycling either take place after normal termination of translation or after ribosome stalling during cotranslational translocation at the endoplasmic reticulum. Involved in reticulophagy in response to endoplasmic reticulum stress by mediating ufmylation of proteins such as CYB5R3 and RPN1, thereby promoting lysosomal degradation of ufmylated proteins. Ufmylation in response to endoplasmic reticulum stress is essential for processes such as hematopoiesis, blood vessel morphogenesis or inflammatory response. Mediates ufmylation of DDRGK1 and CDK5RAP3; the role of these modifications is however unclear: as both DDRGK1 and CDK5RAP3 act as substrate adapters for ufmylation, it is uncertain whether ufmylation of these proteins is, a collateral effect or is required for ufmylation. Acts as a negative regulator of T-cell activation by mediating ufmylation and stabilization of PDCD1/PD-1. Also involved in the response to DNA damage: recruited to double-strand break sites following DNA damage and mediates monoufmylation of histone H4 and ufmylation of MRE11. Mediates ufmylation of TP53/p53, promoting its stability. Catalyzes ufmylation of TRIP4, thereby playing a role in nuclear receptor-mediated transcription. Required for hematopoietic stem cell function and hematopoiesis. This chain is E3 UFM1-protein ligase 1, found in Macaca fascicularis (Crab-eating macaque).